Reading from the N-terminus, the 675-residue chain is Putative methyl-accepting chemotaxis AlkN (675 aa).

2 consecutive transmembrane segments (helical) span residues 24–44 (IALYVGLAIFIVLALANFLLS) and 303–323 (FPSVWLGGVSAGLAVLFFFII). Residues 343 to 394 (QRNQAAILRLLDELGDLADGDLTVQATVTEDFTGAIADSINYSIDQLRNLVQ) enclose the HAMP domain. The 237-residue stretch at 399–635 (SAVQVASAAQ…HISNTMNVIQ (237 aa)) folds into the Methyl-accepting transducer domain.

This sequence belongs to the methyl-accepting chemotaxis (MCP) protein family.

The protein resides in the membrane. It participates in hydrocarbon metabolism; alkane degradation. In terms of biological role, chemotactic-signal transducers respond to changes in the concentration of attractants and repellents in the environment, transduce a signal from the outside to the inside of the cell, and facilitate sensory adaptation through the variation of the level of methylation. This Alcanivorax borkumensis (strain ATCC 700651 / DSM 11573 / NCIMB 13689 / SK2) protein is Putative methyl-accepting chemotaxis AlkN.